The primary structure comprises 416 residues: LysM domain-containing GPI-anchored protein 1 (416 aa).

The N-terminal stretch at 1-27 (MKIPEKPIFLIFVSLILASSLTFTATA) is a signal peptide. Intrachain disulfides connect Cys-34/Cys-100, Cys-40/Cys-163, Cys-98/Cys-161, and Cys-100/Cys-163. N-linked (GlcNAc...) asparagine glycosylation is present at Asn-37. Residues 110–157 (THYKTRPSDNLGSIADSVYGGLVSAEQIQEANSVNDPSLLDVGTSLVI) enclose the LysM 1 domain. Residue Asn-165 is glycosylated (N-linked (GlcNAc...) asparagine). The 44-residue stretch at 176-219 (LSYVVKEIDTLVGIARRYSTTITDLMNVNAMGAPDVSSGDILAV) folds into the LysM 2 domain. 2 disulfides stabilise this stretch: Cys-224–Cys-256 and Cys-251–Cys-279. Asn-241 carries an N-linked (GlcNAc...) asparagine glycan. N-linked (GlcNAc...) asparagine glycans are attached at residues Asn-288, Asn-299, and Asn-310. The disordered stretch occupies residues 356–376 (DGPGSIASSPRSSMLPGGGIL). The GPI-anchor amidated alanine moiety is linked to residue Ala-391. Residues 392 to 416 (SASSVSYFFITFLISIASFSLALSS) constitute a propeptide, removed in mature form.

As to quaternary structure, interacts with peptidoglycans.

Its subcellular location is the cell membrane. It localises to the secreted. Functionally, required as a cell surface receptor for peptidoglycan (PGN) elicitor signaling leading to innate immunity. Plays an essential role in detecting PGNs and restricting bacterial growth (of Pseudomonas syringae pv. tomato DC3000 for example). The protein is LysM domain-containing GPI-anchored protein 1 (LYM1) of Arabidopsis thaliana (Mouse-ear cress).